The sequence spans 382 residues: Anhydro-N-acetylmuramic acid kinase (382 aa).

An ATP-binding site is contributed by 9–16 (GTSLDGID).

This sequence belongs to the anhydro-N-acetylmuramic acid kinase family.

The catalysed reaction is 1,6-anhydro-N-acetyl-beta-muramate + ATP + H2O = N-acetyl-D-muramate 6-phosphate + ADP + H(+). It participates in amino-sugar metabolism; 1,6-anhydro-N-acetylmuramate degradation. It functions in the pathway cell wall biogenesis; peptidoglycan recycling. Catalyzes the specific phosphorylation of 1,6-anhydro-N-acetylmuramic acid (anhMurNAc) with the simultaneous cleavage of the 1,6-anhydro ring, generating MurNAc-6-P. Is required for the utilization of anhMurNAc either imported from the medium or derived from its own cell wall murein, and thus plays a role in cell wall recycling. The protein is Anhydro-N-acetylmuramic acid kinase of Bacillus cereus (strain AH820).